The sequence spans 510 residues: Ninja-family protein mc410 (510 aa).

Disordered stretches follow at residues 1 to 179, 323 to 414, and 481 to 510; these read MDEN…RQIL, HPSH…PSEF, and RHAS…SAQS. 2 stretches are compositionally biased toward basic and acidic residues: residues 31-44 and 103-146; these read SKVE…KVIN and RPVE…DKTR. Residues 148–160 show a composition bias toward polar residues; it reads SHISITTDEGSTA. Composition is skewed to basic and acidic residues over residues 363 to 389 and 397 to 406; these read RAME…EENV and RAKDPPDQPR. The span at 485-496 shows a compositional bias: polar residues; that stretch reads VEQTSQEPGTGV. The span at 497 to 510 shows a compositional bias: low complexity; that stretch reads SSFPSSNPAASAQS.

The protein belongs to the Ninja family.

Its subcellular location is the nucleus. The polypeptide is Ninja-family protein mc410 (MC410) (Nicotiana tabacum (Common tobacco)).